Here is a 471-residue protein sequence, read N- to C-terminus: Protein naked cuticle homolog 1 (471 aa).

Disordered regions lie at residues 1–23 (MGKL…GDSF) and 41–82 (QRCP…DEDD). Residue Gly-2 is the site of N-myristoyl glycine attachment. Residues 62–75 (GTRELVGDTSREAL) are compositionally biased toward basic and acidic residues. Positions 125 to 190 (QCDVSVEEDS…LRVKLTVAPD (66 aa)) are interaction with DVL1, DVL2 and DVL3. The region spanning 131-166 (EEDSRQEWTFTLYDFDNNGKVTREDITSLLHTIYEV) is the EF-hand domain. Ca(2+) is bound by residues Asp-144, Asp-146, Asn-148, Lys-150, and Asp-155. Disordered stretches follow at residues 273 to 314 (GPGS…QGVD), 337 to 382 (GTQD…SPSA), and 448 to 471 (QAVQ…FYQP). A compositionally biased stretch (basic residues) spans 453–471 (HEHHHHHEHHHHYHHFYQP).

This sequence belongs to the NKD family. As to quaternary structure, interacts with DVL1, DVL2, DVL3 and PPP2R3A. As to expression, highly expressed in lung. Also expressed in brain, heart, kidney, liver, skin, stomach and testis. Within the testis expression is found in the seminiferous epithelium and round and elongating spermatids.

The protein resides in the cell membrane. It localises to the cytoplasm. Cell autonomous antagonist of the canonical Wnt signaling pathway. May activate a second Wnt signaling pathway that controls planar cell polarity. Required for spermatogenesis. This is Protein naked cuticle homolog 1 (Nkd1) from Mus musculus (Mouse).